Here is a 666-residue protein sequence, read N- to C-terminus: Probable potassium transport system protein Kup (666 aa).

Transmembrane regions (helical) follow at residues 16-36 (GFII…LYTM), 58-78 (ISLI…LIAL), 100-120 (PWLI…GALT), 141-161 (IYQN…VLFG), 165-185 (FGTG…FSFL), 221-241 (IFIL…YSDL), 253-273 (WPFV…WILA), 294-314 (VYLV…LISG), 343-363 (LYIP…VLAF), 373-393 (YGLA…YYLI), 399-419 (PILA…FFLA), and 424-444 (FMHG…VMFI).

It belongs to the HAK/KUP transporter (TC 2.A.72) family.

It is found in the cell membrane. The catalysed reaction is K(+)(in) + H(+)(in) = K(+)(out) + H(+)(out). Functionally, transport of potassium into the cell. Likely operates as a K(+):H(+) symporter. This chain is Probable potassium transport system protein Kup, found in Streptococcus pyogenes serotype M49 (strain NZ131).